The primary structure comprises 200 residues: Holliday junction branch migration complex subunit RuvA (200 aa).

The segment at 1–63 is domain I; that stretch reads MFEYLTGLIT…EDAITLFGFA (63 aa). Residues 64–142 are domain II; that stretch reads TQAEKRLFTQ…AVQDEVQLDF (79 aa). The flexible linker stretch occupies residues 143–151; sequence TAPGPLGPS. The tract at residues 151 to 200 is domain III; that stretch reads SAALQDALAALESLGYTTKQVERVQKQLEGLQGELSTNDYLSQGLKLLSR.

Belongs to the RuvA family. Homotetramer. Forms an RuvA(8)-RuvB(12)-Holliday junction (HJ) complex. HJ DNA is sandwiched between 2 RuvA tetramers; dsDNA enters through RuvA and exits via RuvB. An RuvB hexamer assembles on each DNA strand where it exits the tetramer. Each RuvB hexamer is contacted by two RuvA subunits (via domain III) on 2 adjacent RuvB subunits; this complex drives branch migration. In the full resolvosome a probable DNA-RuvA(4)-RuvB(12)-RuvC(2) complex forms which resolves the HJ.

It is found in the cytoplasm. Functionally, the RuvA-RuvB-RuvC complex processes Holliday junction (HJ) DNA during genetic recombination and DNA repair, while the RuvA-RuvB complex plays an important role in the rescue of blocked DNA replication forks via replication fork reversal (RFR). RuvA specifically binds to HJ cruciform DNA, conferring on it an open structure. The RuvB hexamer acts as an ATP-dependent pump, pulling dsDNA into and through the RuvAB complex. HJ branch migration allows RuvC to scan DNA until it finds its consensus sequence, where it cleaves and resolves the cruciform DNA. The chain is Holliday junction branch migration complex subunit RuvA from Limosilactobacillus fermentum (strain NBRC 3956 / LMG 18251) (Lactobacillus fermentum).